Consider the following 326-residue polypeptide: RNA-binding motif protein, X-linked 2 (326 aa).

Lysine 8 is covalently cross-linked (Glycyl lysine isopeptide (Lys-Gly) (interchain with G-Cter in SUMO2)). Residues 36 to 114 (AWIFVGGLPY…RTIRVDHVSN (79 aa)) form the RRM domain. Positions 117-326 (APQESEDVDD…SYHGSDRRHH (210 aa)) are disordered. Phosphothreonine is present on threonine 140. Serine 149 bears the Phosphoserine mark. The segment covering 157–172 (TKKHKKDKKEKKKRKK) has biased composition (basic residues). Residues 177–190 (GQAQAEQPSCSRSA) are compositionally biased toward polar residues. 4 stretches are compositionally biased toward basic and acidic residues: residues 191 to 200 (TVKEKKDERA), 207 to 219 (KTSE…EHRE), 236 to 245 (ARAEDPECKA), and 255 to 273 (KSAS…ERGR). At serine 274 the chain carries Phosphoserine. The segment covering 291-312 (HRSRSRSRSPDKSHRHKKYRHS) has biased composition (basic residues). A compositionally biased stretch (basic and acidic residues) spans 313 to 326 (RERDSYHGSDRRHH).

The protein belongs to the IST3 family. Part of the activated spliceosome B/catalytic step 1 spliceosome, one of the forms of the spliceosome which has a well-formed active site but still cannot catalyze the branching reaction and is composed of at least 52 proteins, the U2, U5 and U6 snRNAs and the pre-mRNA. Component of the minor spliceosome, which splices U12-type introns.

Its subcellular location is the nucleus. In terms of biological role, involved in pre-mRNA splicing as component of the activated spliceosome. As a component of the minor spliceosome, involved in the splicing of U12-type introns in pre-mRNAs. The chain is RNA-binding motif protein, X-linked 2 (Rbmx2) from Mus musculus (Mouse).